The primary structure comprises 310 residues: Isoflavone reductase homolog A622 (310 aa).

Residues 13–19 (GGTGYIG), Arg-38, and Lys-47 each bind NADP(+). Lys-135 serves as the catalytic Proton acceptor. Arg-139 is an NADP(+) binding site.

The protein belongs to the NmrA-type oxidoreductase family. Isoflavone reductase subfamily. Monomer. As to expression, expressed in roots and stems.

It localises to the cytoplasm. It functions in the pathway alkaloid biosynthesis; nicotine biosynthesis. In terms of biological role, NADPH-binding protein. Involved in the biosynthesis of pyridine alkaloid natural products, leading mainly to the production of anabasine, anatabine, nicotine and nornicotine, effective deterrents against herbivores with antiparasitic and pesticide properties (neurotoxins); nornicotine serves as the precursor in the synthesis of the carcinogen compound N'-nitrosonornicotine (NNN). Reductase involved in a late step of tobacco alkaloid biosynthesis. Triggers either the formation of a nicotinic acid-derived precursor or the final condensation reaction of tobacco alkaloids. The protein is Isoflavone reductase homolog A622 of Nicotiana sylvestris (Wood tobacco).